The sequence spans 316 residues: Thymidylate synthase (316 aa).

DUMP contacts are provided by residues arginine 23 and 178-179 (RR). The Nucleophile role is filled by cysteine 198. DUMP-binding positions include 218–221 (RSGD), asparagine 229, and 259–261 (HIY). A (6R)-5,10-methylene-5,6,7,8-tetrahydrofolate-binding site is contributed by aspartate 221. Alanine 315 lines the (6R)-5,10-methylene-5,6,7,8-tetrahydrofolate pocket.

Belongs to the thymidylate synthase family. Bacterial-type ThyA subfamily. In terms of assembly, homodimer.

The protein resides in the cytoplasm. It catalyses the reaction dUMP + (6R)-5,10-methylene-5,6,7,8-tetrahydrofolate = 7,8-dihydrofolate + dTMP. The protein operates within pyrimidine metabolism; dTTP biosynthesis. In terms of biological role, catalyzes the reductive methylation of 2'-deoxyuridine-5'-monophosphate (dUMP) to 2'-deoxythymidine-5'-monophosphate (dTMP) while utilizing 5,10-methylenetetrahydrofolate (mTHF) as the methyl donor and reductant in the reaction, yielding dihydrofolate (DHF) as a by-product. This enzymatic reaction provides an intracellular de novo source of dTMP, an essential precursor for DNA biosynthesis. The sequence is that of Thymidylate synthase from Pediococcus pentosaceus (strain ATCC 25745 / CCUG 21536 / LMG 10740 / 183-1w).